The primary structure comprises 254 residues: Alcohol dehydrogenase 2 (254 aa).

10–33 (FVAGLGGIGFDTSREIVKSGPKNL) is a binding site for NAD(+). S138 is a substrate binding site. The active-site Proton acceptor is the Y151.

The protein belongs to the short-chain dehydrogenases/reductases (SDR) family. Homodimer.

It carries out the reaction a primary alcohol + NAD(+) = an aldehyde + NADH + H(+). It catalyses the reaction a secondary alcohol + NAD(+) = a ketone + NADH + H(+). The polypeptide is Alcohol dehydrogenase 2 (Adh2) (Drosophila mulleri (Fruit fly)).